A 526-amino-acid polypeptide reads, in one-letter code: Keratin, type I cytoskeletal 10 (526 aa).

Residues Met-1–Arg-16 show a composition bias toward low complexity. Residues Met-1–Gly-40 form a disordered region. The head stretch occupies residues Met-1–Asn-144. 5 positions are modified to phosphoserine: Ser-17, Ser-38, Ser-49, Ser-52, and Ser-169. Gly residues predominate over residues Ser-17 to Ser-28. The segment at Glu-145–Trp-180 is coil 1A. In terms of domain architecture, IF rod spans Glu-145 to Val-459. A linker 1 region spans residues Tyr-181–Thr-201. A coil 1B region spans residues Ile-202–Leu-293. The interval Gln-294–Leu-316 is linker 12. The segment at Leu-317–Glu-455 is coil 2. The interval Gly-456–Tyr-526 is tail.

It belongs to the intermediate filament family. Heterotetramer of two type I and two type II keratins. Heterodimer with KRT1. Two heterodimers of KRT1 and KRT10 form a heterotetramer. The KRT10 subunit in the heterotetramer is probably disulfide-linked.

The protein resides in the secreted. It is found in the extracellular space. It localises to the cell surface. Its subcellular location is the cytoplasm. Plays a role in the establishment of the epidermal barrier on plantar skin. Involved in the maintenance of cell layer development and keratin filament bundles in suprabasal cells of the epithelium. The polypeptide is Keratin, type I cytoskeletal 10 (Rattus norvegicus (Rat)).